Reading from the N-terminus, the 554-residue chain is MLSDIEIARSAKLKKIDLIANELDIPEEYYNLYGKNIAKVSHKYLNELNFKNDGNLVMVTAITPTPAGEGKTTTSISLSMALNKIHKRSIVTLREPSLGPVMGIKGGAAGGGYSQVLPMEDINLHFTGDIHAVTSAHNLISAILDDYIKYNKYDIDSTQVSWPRTMDMNDRALREIIVALGGKKNGYPRQDGFIITAASEIMAILCLIENLEDLKKKLSNIVVAKNKKGEPVTVKDLEITGALSVLLKDAINPNLVQTIENTPAFVHGGPFANIAHGTNSILATKLALKLSDYVVTETGFGSDLGGEKFYDFVSPTFGLKPSATVLVATIRALKYHGGQNLKDLNTPNLESLEKGLPNLQVHVENLKKYNIPVVVSLNKFYSDTDEEINMVKDYCDKLGVEVSVNEGFEKGSEGAIDLAEKVVKVSEQQSELKSIYDFKDPLEVKIEKLAKNIYRASKVEYSSEALSTIKFLKKYGYENLPVIVAKTQYSISDDPKKLGFPKDYTFTIRDFELSAGAGFIVALAGDILRMPGLSKVPNAVNMDIDNEGNISGLS.

An ATP-binding site is contributed by 65-72 (TPAGEGKT).

It belongs to the formate--tetrahydrofolate ligase family.

It carries out the reaction (6S)-5,6,7,8-tetrahydrofolate + formate + ATP = (6R)-10-formyltetrahydrofolate + ADP + phosphate. The protein operates within one-carbon metabolism; tetrahydrofolate interconversion. This chain is Formate--tetrahydrofolate ligase, found in Petrotoga mobilis (strain DSM 10674 / SJ95).